The chain runs to 625 residues: Protein SUPPRESSOR OF GENE SILENCING 3 (625 aa).

3 disordered regions span residues 1-20 (MSSR…GYRP), 30-148 (AGTR…SAQH), and 161-195 (VDNA…QKSH). Positions 54–70 (KPGNTSGKTWVSQNSNP) are enriched in polar residues. The span at 80–94 (GRGSNVSGRGNNVSG) shows a compositional bias: low complexity. Residues 161-188 (VDNASEEENDSDALDDSDDDLASDDYDS) are compositionally biased toward acidic residues. 2 coiled-coil regions span residues 452 to 533 (KNKL…QQQE) and 564 to 615 (IEFQ…EQLM).

The protein belongs to the SGS3 family. As to quaternary structure, interacts with begomoviruses protein V2. Interacts with SGIP1 in cytoplasmic granules.

The protein resides in the cytoplasm. It is found in the perinuclear region. It localises to the cytoplasmic granule. Functionally, required for post-transcriptional gene silencing and natural virus resistance. May bind nucleic acids and is essential for the biogenesis of trans-acting siRNAs but is not required for silencing induced by IR-PTGS. Involved in the juvenile-to-adult transition regulation. In case of begomoviruses infection, it is targeted by the viral protein V2 leading to suppression of post-transcriptional gene silencing. Involved in the mechanisms necessary for quick response to heat and subsequent heritable transgenerational memory of heat acclimation (global warming) such as early flowering and attenuated immunity; this process includes epigenetic regulation as well as post-transcriptional gene silencing (PTGS). In response to heat, HSFA2 is activated and promotes the expression of REF6 which in turn derepresses HSFA2, thus establishing an inheritable feedback loop able to trigger SGIP1 and subsequent SGIP1-mediated SGS3 degradation; this prevents the biosynthesis of trans-acting siRNA (tasiRNA) and leads to the release of HTT5, which drives early flowering but attenuates immunity. This Arabidopsis thaliana (Mouse-ear cress) protein is Protein SUPPRESSOR OF GENE SILENCING 3.